We begin with the raw amino-acid sequence, 256 residues long: 1-(5-phosphoribosyl)-5-[(5-phosphoribosylamino)methylideneamino] imidazole-4-carboxamide isomerase (256 aa).

The active-site Proton acceptor is the aspartate 8. Catalysis depends on aspartate 130, which acts as the Proton donor.

The protein belongs to the HisA/HisF family.

It localises to the cytoplasm. The catalysed reaction is 1-(5-phospho-beta-D-ribosyl)-5-[(5-phospho-beta-D-ribosylamino)methylideneamino]imidazole-4-carboxamide = 5-[(5-phospho-1-deoxy-D-ribulos-1-ylimino)methylamino]-1-(5-phospho-beta-D-ribosyl)imidazole-4-carboxamide. The protein operates within amino-acid biosynthesis; L-histidine biosynthesis; L-histidine from 5-phospho-alpha-D-ribose 1-diphosphate: step 4/9. This is 1-(5-phosphoribosyl)-5-[(5-phosphoribosylamino)methylideneamino] imidazole-4-carboxamide isomerase from Chlorobium luteolum (strain DSM 273 / BCRC 81028 / 2530) (Pelodictyon luteolum).